The primary structure comprises 202 residues: MESSSMTTHQEEPLDLSTGNHGNSELSDEQQIMQVMESCGMFLQQNLFAWFLQSMLEASASQPQLTQDEPPENDTKENDLVKQNKSEVNDENESTPSPTQNSRRRTSTGKIDRRMVGKMCTRRYEANARERNRVQQLSKMFDQLRVCLPIEDDAKISKLATLKVASSYIGYLGAILQENSNDEEEFKKQLQVELECAKTLRK.

Disordered regions lie at residues 1 to 26 (MESS…NSEL) and 83 to 112 (QNKS…GKID). Positions 17-26 (STGNHGNSEL) are enriched in polar residues. Positions 121-134 (TRRYEANARERNRV) are basic motif. Residues 121–172 (TRRYEANARERNRVQQLSKMFDQLRVCLPIEDDAKISKLATLKVASSYIGYL) form the bHLH domain. A helix-loop-helix motif region spans residues 135 to 172 (QQLSKMFDQLRVCLPIEDDAKISKLATLKVASSYIGYL).

Heterodimer with hlh-2. In terms of tissue distribution, expressed in intestine, neurons in head, body and tail, and in body hypodermis, and vulva. Expressed in neurons in the male-specific genital sensilla (simple sense organs) known as rays.

It localises to the nucleus. The protein localises to the cytoplasm. Functionally, probable transcription factor which binds the E box motif 5'-CA[TC][AG]TG-3'. This chain is Helix-loop-helix protein 10, found in Caenorhabditis elegans.